Here is a 685-residue protein sequence, read N- to C-terminus: Cilia- and flagella-associated protein 36 (685 aa).

Residues 1–20 form a disordered region; sequence MLRRFSKKNKNPEGGSDDAS. Residues 197-242 adopt a coiled-coil conformation; sequence SEELEMMAQNSRIQREALEQEIRKEEILLQQALDEGARAQNQNQNQ. Over residues 287-310 the composition is skewed to low complexity; that stretch reads TGTMTSSTGVSVGTLTNTGVSSGT. The segment at 287–573 is disordered; sequence TGTMTSSTGV…LRGNKYDGDV (287 aa). A compositionally biased stretch (basic and acidic residues) spans 363–372; the sequence is EAEKSKRERP. Over residues 410–434 the composition is skewed to polar residues; that stretch reads GTTSKKSIATVTASPEMSSKTTQME. Basic and acidic residues-rich tracts occupy residues 439 to 456 and 508 to 557; these read GEGK…ERKY and HEPR…ESKP.

The protein belongs to the CFAP36 family. In terms of tissue distribution, expressed in amphid and phasmid ciliated neurons.

It localises to the cell projection. The protein resides in the cilium. The protein localises to the cytoplasm. It is found in the cytoskeleton. Its subcellular location is the cilium axoneme. This chain is Cilia- and flagella-associated protein 36, found in Caenorhabditis elegans.